We begin with the raw amino-acid sequence, 388 residues long: Succinate--CoA ligase [ADP-forming] subunit beta (388 aa).

Positions 9–244 constitute an ATP-grasp domain; it reads KQIFAEYQLP…PSQEDPREAL (236 aa). Residues lysine 46, 53-55, glutamate 99, serine 102, and glutamate 107 each bind ATP; that span reads GRG. Residues asparagine 199 and aspartate 213 each coordinate Mg(2+). Substrate-binding positions include asparagine 264 and 321–323; that span reads GIV.

It belongs to the succinate/malate CoA ligase beta subunit family. Heterotetramer of two alpha and two beta subunits. It depends on Mg(2+) as a cofactor.

The catalysed reaction is succinate + ATP + CoA = succinyl-CoA + ADP + phosphate. It carries out the reaction GTP + succinate + CoA = succinyl-CoA + GDP + phosphate. Its pathway is carbohydrate metabolism; tricarboxylic acid cycle; succinate from succinyl-CoA (ligase route): step 1/1. Its function is as follows. Succinyl-CoA synthetase functions in the citric acid cycle (TCA), coupling the hydrolysis of succinyl-CoA to the synthesis of either ATP or GTP and thus represents the only step of substrate-level phosphorylation in the TCA. The beta subunit provides nucleotide specificity of the enzyme and binds the substrate succinate, while the binding sites for coenzyme A and phosphate are found in the alpha subunit. The protein is Succinate--CoA ligase [ADP-forming] subunit beta of Pasteurella multocida (strain Pm70).